The chain runs to 303 residues: Glutathione transport system permease protein GsiD (303 aa).

A run of 6 helical transmembrane segments spans residues 40 to 60 (AMTA…ARWI), 105 to 125 (LAAG…LGLL), 144 to 164 (LFAF…GSGI), 165 to 185 (ANVI…LVRG), 222 to 242 (IVVF…SLSF), and 266 to 286 (VIAP…VLAF). The ABC transmembrane type-1 domain occupies 101-290 (AQISLAAGVF…LTVLAFNLLG (190 aa)).

This sequence belongs to the binding-protein-dependent transport system permease family. As to quaternary structure, the complex is composed of two ATP-binding proteins (GsiA), two transmembrane proteins (GsiC and GsiD) and a solute-binding protein (GsiB).

It localises to the cell inner membrane. Part of the ABC transporter complex GsiABCD involved in glutathione import. Probably responsible for the translocation of the substrate across the membrane. The protein is Glutathione transport system permease protein GsiD of Escherichia coli O157:H7.